Here is a 90-residue protein sequence, read N- to C-terminus: MNNSVITVIGKDRVGIVYDVSKILAENQINILNISQQLMDDFFTMIILVDTSKCSKSRQEVLDLFAEESKKLALDIRMQNEEIFQAMHRI.

Residues 5–83 (VITVIGKDRV…LDIRMQNEEI (79 aa)) enclose the ACT domain.

It belongs to the UPF0237 family.

This Neisseria meningitidis serogroup B (strain ATCC BAA-335 / MC58) protein is UPF0237 protein NMB1653.